The following is a 691-amino-acid chain: Protein 4.2 (691 aa).

A lipid anchor (N-myristoyl glycine) is attached at Gly-2. The tract at residues 31–39 (LTLRRGQSF) is band 3 binding. Ser-248 carries the post-translational modification Phosphoserine. At Tyr-570 the chain carries Phosphotyrosine.

It belongs to the transglutaminase superfamily. Transglutaminase family. Component of the ankyrin-1 complex in the erythrocyte, composed of ANK1, RHCE, RHAG, SLC4A1, EPB42, GYPA, GYPB and AQP1. Interacts with SLC4A1 (via the cytoplasmic domain); this interaction is mediated by the SLC4A1 Band 3-I dimer. Interacts with ANK1 (via ANK 1-13 repeats). Interacts with AQP1 (via the C-terminal).

The protein resides in the cell membrane. It localises to the cytoplasm. The protein localises to the cytoskeleton. Its function is as follows. Component of the ankyrin-1 complex, a multiprotein complex involved in the stability and shape of the erythrocyte membrane. This chain is Protein 4.2, found in Mus musculus (Mouse).